The primary structure comprises 238 residues: Uridylate kinase (238 aa).

12–15 (KLSG) contacts ATP. Residues 20 to 25 (GEKGFG) form an involved in allosteric activation by GTP region. Residue G54 coordinates UMP. ATP is bound by residues G55 and R59. UMP contacts are provided by residues D72 and 133–140 (TGNPYFST). ATP-binding residues include Y166 and D169.

Belongs to the UMP kinase family. In terms of assembly, homohexamer.

The protein resides in the cytoplasm. The enzyme catalyses UMP + ATP = UDP + ADP. It participates in pyrimidine metabolism; CTP biosynthesis via de novo pathway; UDP from UMP (UMPK route): step 1/1. Its activity is regulated as follows. Allosterically activated by GTP. Inhibited by UTP. Functionally, catalyzes the reversible phosphorylation of UMP to UDP. The protein is Uridylate kinase of Clostridium botulinum (strain Langeland / NCTC 10281 / Type F).